Reading from the N-terminus, the 364-residue chain is Mannose-1-phosphate guanyltransferase (364 aa).

Belongs to the transferase hexapeptide repeat family.

The protein localises to the cytoplasm. It carries out the reaction alpha-D-mannose 1-phosphate + GTP + H(+) = GDP-alpha-D-mannose + diphosphate. Its pathway is nucleotide-sugar biosynthesis; GDP-alpha-D-mannose biosynthesis; GDP-alpha-D-mannose from alpha-D-mannose 1-phosphate (GTP route): step 1/1. Functionally, involved in cell wall synthesis where it is required for glycosylation. Involved in cell cycle progression through cell-size checkpoint. The sequence is that of Mannose-1-phosphate guanyltransferase (mpg1) from Emericella nidulans (strain FGSC A4 / ATCC 38163 / CBS 112.46 / NRRL 194 / M139) (Aspergillus nidulans).